Here is a 337-residue protein sequence, read N- to C-terminus: MLALGKLLELTLAGHEPSAKIQLTPDGTRLRWLDEGALEITPPAARDNGLDLLLSAGIHGNETAPIELLDRLLRGIARNELHPAARILFLFGNPEAMRRGERFVEQDINRLFNGRHEQSSGFEAIRACDLEHLAATFFGKDTGRTRLHYDLHTAIRGSKIEQFALYPWHEGRTHSRRELQRLRAAGIEAVLLQNKGSITFSSYTYGQLGAEAFTLELGKARAFGQNQLVNLDLLENALQALIEGREVIDDEPTLDGLQLFAVSREIIKHSDSFQLHLPADIENFTELEPGYLLAEDIADTRWVVEEQNARIIFPNPKVKNGLRAGILIVPDDGAGLA.

3 residues coordinate Zn(2+): His-59, Glu-62, and His-152. The active site involves Glu-216.

This sequence belongs to the AspA/AstE family. Succinylglutamate desuccinylase subfamily. Zn(2+) is required as a cofactor.

It catalyses the reaction N-succinyl-L-glutamate + H2O = L-glutamate + succinate. It functions in the pathway amino-acid degradation; L-arginine degradation via AST pathway; L-glutamate and succinate from L-arginine: step 5/5. Transforms N(2)-succinylglutamate into succinate and glutamate. This is Succinylglutamate desuccinylase from Ectopseudomonas mendocina (strain ymp) (Pseudomonas mendocina).